The sequence spans 703 residues: Collagen alpha-2(VIII) chain (703 aa).

The N-terminal stretch at 1–28 (MLGTLTPLSSLLLLLLVLVLGCGPRASS) is a signal peptide. Residues 29–76 (GGGAGGAAGYAPVKYIQPMQKGPVGPPFREGKGQYLEMPLPLLPMDLK) are nonhelical region (NC2). The disordered stretch occupies residues 70-544 (LLPMDLKGEP…AFDETGIAGL (475 aa)). The interval 77–536 (GEPGPPGKPG…PGPPGAPGAF (460 aa)) is triple-helical region. Positions 79-97 (PGPPGKPGPRGPPGPPGFP) are enriched in pro residues. Residues 166–192 (PSGITIPGKPGAQGVPGPPGFQGEPGP) show a composition bias toward low complexity. Residues 206–224 (GDNGVGQPGLPGAPGQGGA) are compositionally biased toward gly residues. Low complexity-rich tracts occupy residues 265 to 275 (EPGAVGPKGPP) and 285 to 297 (AAGL…PSGA). A compositionally biased stretch (gly residues) spans 433–442 (GRPGGPGVAG). Composition is skewed to low complexity over residues 444 to 462 (LGQK…RGPS) and 476 to 486 (PQGLPGLKGEP). The segment covering 506-532 (TGPPGVPGSPGITGPPGPPGPPGPPGA) has biased composition (pro residues). The tract at residues 537-703 (DETGIAGLHL…SFSGFLLCPT (167 aa)) is nonhelical region (NC1). Residues 570–703 (SAHATPAFTA…SFSGFLLCPT (134 aa)) enclose the C1q domain.

In terms of assembly, homotrimers, or heterotrimers in association with alpha 2(VIII) type collagens. Four homotrimers can form a tetrahedron stabilized by central interacting C-terminal NC1 trimers. In terms of processing, proteolytically cleaved by neutrophil elastase, in vitro. Post-translationally, prolines at the third position of the tripeptide repeating unit (G-X-Y) are hydroxylated in some or all of the chains. In terms of tissue distribution, expressed primarily in the subendothelium of large blood vessels. Also expressed in arterioles and venules in muscle, heart, kidney, spleen, umbilical cord, liver and lung and is also found in connective tissue layers around hair follicles, around nerve bundles in muscle, in the dura of the optic nerve, in cornea and sclera, and in the perichondrium of cartilaginous tissues. In the kidney, expressed in mesangial cells, glomerular endothelial cells, and tubular epithelial cells. Also expressed in mast cells, and in astrocytes during the repair process. Expressed in Descemet's membrane.

It is found in the secreted. Its subcellular location is the extracellular space. The protein resides in the extracellular matrix. The protein localises to the basement membrane. In terms of biological role, macromolecular component of the subendothelium. Major component of the Descemet's membrane (basement membrane) of corneal endothelial cells. Also a component of the endothelia of blood vessels. Necessary for migration and proliferation of vascular smooth muscle cells and thus, has a potential role in the maintenance of vessel wall integrity and structure, in particular in atherogenesis. This chain is Collagen alpha-2(VIII) chain (COL8A2), found in Homo sapiens (Human).